We begin with the raw amino-acid sequence, 240 residues long: Adiponectin (240 aa).

The N-terminal stretch at 1-17 (MLLQGALLLLLALPSHG) is a signal peptide. 5-hydroxylysine is present on K28. K28 carries an O-linked (Gal...) hydroxylysine glycan. The tract at residues 29–100 (GACAGWMAGI…GTPGRKGEPG (72 aa)) is disordered. C31 carries the post-translational modification S-(2-succinyl)cysteine. 3 positions are modified to 4-hydroxyproline: P39, P42, and P48. In terms of domain architecture, Collagen-like spans 43 to 102 (GHNGTPGRDGRDGTPGEKGEKGDPGLVGPKGDTGETGITGIEGPRGFPGTPGRKGEPGES). Positions 50 to 65 (RDGRDGTPGEKGEKGD) are enriched in basic and acidic residues. K60, K63, and K72 each carry 5-hydroxylysine. Residues K60, K63, and K72 are each glycosylated (O-linked (Gal...) hydroxylysine). P86 is subject to 4-hydroxyproline. K96 is modified (5-hydroxylysine). K96 carries O-linked (Gal...) hydroxylysine glycosylation. The C1q domain occupies 103-240 (AYVYRSAFSV…GFLLYHNIVE (138 aa)).

Homomultimer. Forms trimers, hexamers and 12- to 18-mers. The trimers (low molecular weight complexes / LMW) are assembled via non-covalent interactions of the collagen-like domains in a triple helix and hydrophobic interactions within the globular C1q domain. Several trimers can associate to form disulfide-linked hexamers (middle molecular weight complexes / MMW) and larger complexes (higher molecular weight / HMW). The HMW-complex assembly is also modulated by the degree of lysine hydroxylation and glycosylation. LMW, MMW and HMW complexes bind to HBEGF, MMW and HMW complexes bind to PDGFB, and HMW complex binds to FGF2. Interacts with CTRP9 via the C1q domain (heterotrimeric complex). Post-translationally, HMW complexes are more extensively glycosylated than smaller oligomers. Hydroxylation and glycosylation of the lysine residues within the collagen-like domain of adiponectin seem to be critically involved in regulating the formation and/or secretion of HMW complexes and consequently contribute to the insulin-sensitizing activity of adiponectin in hepatocytes. In terms of processing, O-glycosylated. O-linked glycans on hydroxylysine residues consist of Glc-Gal disaccharides bound to the oxygen atom of post-translationally added hydroxyl groups. O-linked glycosylations elsewhere disialylated with the structure Neu5Acalpha2-&gt;8Neu5Acalpha2-&gt;3Gal. Sialylated by alpha 2,8-sialyltransferase III. Desialylated forms are rapidly cleared from the circulation. Not N-glycosylated. Succination of Cys-31 by the Krebs cycle intermediate fumarate, which leads to S-(2-succinyl)cysteine residues, inhibits polymerization and secretion of adiponectin. Adiponectin is a major target for succination in both adipocytes and adipose tissue of diabetic mammals. It was proposed that succination of proteins is a biomarker of mitochondrial stress and accumulation of Krebs cycle intermediates in adipose tissue in diabetes and that succination of adiponectin may contribute to the decrease in plasma adiponectin in diabetes.

Its subcellular location is the secreted. Polymerization and secretion of adiponectin is inhibited by succination of cysteine residues by the Krebs cycle intermediate fumarate, which leads to S-(2-succinyl)cysteine residues. Functionally, important adipokine involved in the control of fat metabolism and insulin sensitivity, with direct anti-diabetic, anti-atherogenic and anti-inflammatory activities. Stimulates AMPK phosphorylation and activation in the liver and the skeletal muscle, enhancing glucose utilization and fatty-acid combustion. Antagonizes TNF-alpha by negatively regulating its expression in various tissues such as liver and macrophages, and also by counteracting its effects. Inhibits endothelial NF-kappa-B signaling through a cAMP-dependent pathway. May play a role in cell growth, angiogenesis and tissue remodeling by binding and sequestering various growth factors with distinct binding affinities, depending on the type of complex, LMW, MMW or HMW. The polypeptide is Adiponectin (ADIPOQ) (Bos taurus (Bovine)).